We begin with the raw amino-acid sequence, 100 residues long: MAKKSMIQRELKRQKLVMKYATKRAALKEQIKQTTFLKEKLSLHRKLQQLPRNSSAVRLHNRCMITGRPKGYFRDFGLSRHVLREMAHQGLLPGVCKSSW.

The protein belongs to the universal ribosomal protein uS14 family. In terms of assembly, part of the 30S ribosomal subunit.

It localises to the plastid. The protein resides in the chloroplast. In terms of biological role, binds 16S rRNA, required for the assembly of 30S particles. The protein is Small ribosomal subunit protein uS14c of Chlamydomonas reinhardtii (Chlamydomonas smithii).